The primary structure comprises 653 residues: DNA mismatch repair protein MutL (653 aa).

The disordered stretch occupies residues 368–413 (EVSQVAEPEGKTDITNKKETETKEKAEKKENKQEEKEEKTSAPEYV). Residues 375–408 (PEGKTDITNKKETETKEKAEKKENKQEEKEEKTS) are compositionally biased toward basic and acidic residues.

The protein belongs to the DNA mismatch repair MutL/HexB family.

In terms of biological role, this protein is involved in the repair of mismatches in DNA. It is required for dam-dependent methyl-directed DNA mismatch repair. May act as a 'molecular matchmaker', a protein that promotes the formation of a stable complex between two or more DNA-binding proteins in an ATP-dependent manner without itself being part of a final effector complex. This Lactobacillus delbrueckii subsp. bulgaricus (strain ATCC 11842 / DSM 20081 / BCRC 10696 / JCM 1002 / NBRC 13953 / NCIMB 11778 / NCTC 12712 / WDCM 00102 / Lb 14) protein is DNA mismatch repair protein MutL.